Here is a 335-residue protein sequence, read N- to C-terminus: Glyceraldehyde-3-phosphate dehydrogenase (335 aa).

NAD(+)-binding positions include 11–12 (RI), Asp-33, and Lys-78. D-glyceraldehyde 3-phosphate is bound by residues 148–150 (SST), Thr-179, 208–209 (TG), and Arg-231. An NAD(+)-binding site is contributed by Asn-313.

Belongs to the glyceraldehyde-3-phosphate dehydrogenase family. As to quaternary structure, homotetramer.

Its subcellular location is the cytoplasm. The catalysed reaction is D-glyceraldehyde 3-phosphate + phosphate + NAD(+) = (2R)-3-phospho-glyceroyl phosphate + NADH + H(+). It participates in carbohydrate degradation; glycolysis; pyruvate from D-glyceraldehyde 3-phosphate: step 1/5. The protein is Glyceraldehyde-3-phosphate dehydrogenase (GPD) of Pleurotus sajor-caju (Oyster mushroom).